Reading from the N-terminus, the 133-residue chain is MVLHDDCKLTFLELKERRTFRSIVYKIEDNMQVIVEKHHYKKMHGEREQSYEEFANSLPADECRYAILDIEFVPGERKICFIAWSPSTAKMRKKMIYSSTKDRFKRELDGIQVEFHATDLTDISLDAIRRRIN.

An ADF-H domain is found at 1-133; the sequence is MVLHDDCKLT…SLDAIRRRIN (133 aa).

This sequence belongs to the actin-binding proteins ADF family.

Its subcellular location is the cytoplasm. It is found in the cytoskeleton. In terms of biological role, actin-depolymerizing protein. Severs actin filaments (F-actin) and binds to actin monomers. The sequence is that of Putative actin-depolymerizing factor 11 (ADF11) from Arabidopsis thaliana (Mouse-ear cress).